The chain runs to 935 residues: Intimin (935 aa).

Residues 1-41 form the signal peptide; the sequence is MITHGFYARTRHKHKLKKTFIMLSAGLGLFFYVNQNSFANG. Residues 40-153 form a peptidoglycan-binding region; that stretch reads NGENYFKLSS…KMTKMSPDAT (114 aa). Residues 40 to 153 are sufficient for homodimerization; that stretch reads NGENYFKLSS…KMTKMSPDAT (114 aa). A required for periplasmic localization region spans residues 40-212; it reads NGENYFKLSS…LQAWLQHYGT (173 aa). A LysM domain is found at 63–112; sequence LFYTLKTGETVSSISKSQGISLSVIWSLNKHLYSSESEMLKAAPGQQIIL. Residues 210 to 411 form an inverse autotransporter region; sequence YGTAEVNLQS…LYSMQFRYQF (202 aa). Residues 402–411 form a signature sequence for beta-barrel assembly machinery (BAM), which recognizes the unfolded beta-barrel in the periplasm region; it reads LYSMQFRYQF. Big-1 domains are found at residues 560–653 and 660–754; these read VTDF…VIFV and ITEI…VTFF. The 45-residue stretch at 790 to 834 folds into the BIG2 domain; that stretch reads GGNGTYSWHSENTNIATVDESGKVTLKGKGTAVINVTSGDKQTVS. Cys-859 and Cys-933 are disulfide-bonded.

It belongs to the intimin/invasin family. As to quaternary structure, homodimer. Interacts with Tir.

It localises to the cell outer membrane. An inverse autotransporter. Adhesin, which mediates attachment to the human intestine epithelial cells. Necessary for the production of attaching and effacing lesions on infected human tissue culture cells. Anchored to the outer membrane by binding to peptidoglycan (PGN) via its periplasmic domain, thus helping in receptor interactions during host invasion. PGN-binding may also aid in resisting mechanical and chemical stress during transit of the bacterium through the gastrointestinal tract of the host. This chain is Intimin (eae), found in Escherichia coli O111:H-.